Reading from the N-terminus, the 165-residue chain is NADPH-dependent 7-cyano-7-deazaguanine reductase (165 aa).

The Thioimide intermediate role is filled by cysteine 56. Residue aspartate 63 is the Proton donor of the active site. Substrate contacts are provided by residues 78–80 (VES) and 97–98 (HE).

This sequence belongs to the GTP cyclohydrolase I family. QueF type 1 subfamily.

The protein resides in the cytoplasm. The catalysed reaction is 7-aminomethyl-7-carbaguanine + 2 NADP(+) = 7-cyano-7-deazaguanine + 2 NADPH + 3 H(+). The protein operates within tRNA modification; tRNA-queuosine biosynthesis. Catalyzes the NADPH-dependent reduction of 7-cyano-7-deazaguanine (preQ0) to 7-aminomethyl-7-deazaguanine (preQ1). In Bacillus licheniformis (strain ATCC 14580 / DSM 13 / JCM 2505 / CCUG 7422 / NBRC 12200 / NCIMB 9375 / NCTC 10341 / NRRL NRS-1264 / Gibson 46), this protein is NADPH-dependent 7-cyano-7-deazaguanine reductase.